The primary structure comprises 296 residues: MAKYLGIDVGATWTRAILVDEGGSVLSRAKIRTGVSPVAEIAEVVAGWDFDAVGVGSIGPMDLKTGVVVNSPNSPSRRFPLVEPLKKFKRPVVVANDCVAAVWGEYVFKYHVDNMAYLTLSTGVGVGAIVNGVLLLGKDGNAHELGHAVIDFKSPRRCGCGGLGHFEAFVGGANMPSFYQEVAGEGPLLPEEIFKRAREGYRKAVEFLDVWLDALAAGVATILAAYDPELLIVGGSIALNNWDIVGRELPKRLVKYLGVRGAEIRPASFGDDEVAIGAAALAYKTPETLKKFGYPR.

Belongs to the ROK (NagC/XylR) family. Homodimer. A divalent metal cation serves as cofactor.

The enzyme catalyses D-glucose + ATP = D-glucose 6-phosphate + ADP + H(+). Catalyzes the phosphorylation of D-glucose to D-glucose 6-phosphate using ATP as the phosphate donor. Has a broad hexose specificity, and in addition to glucose, which shows the highest catalytic efficiency, it can also phosphorylate fructose, mannose, galactose and sorbitol. Can also use CTP, GTP or UTP as phosphoryl donor. The chain is Glucokinase from Pyrobaculum calidifontis (strain DSM 21063 / JCM 11548 / VA1).